The sequence spans 450 residues: TATA box-binding protein-associated factor RNA polymerase I subunit A (450 aa).

As to quaternary structure, component of the transcription factor SL1/TIF-IB complex, composed of TBP and at least TAF1A, TAF1B, TAF1C and TAF1D. In the complex interacts directly with TBP, TAF1A and TAF1B. Interaction of the SL1/TIF-IB subunits with TBP excludes interaction of TBP with the transcription factor IID (TFIID) subunits. Interacts with UBFT. Interacts with CEBPA (isoform 1 and isoform 4). Part of Pol I pre-initiation complex (PIC), in which Pol I core assembles with RRN3 and promoter-bound UTBF and SL1/TIF-IB complex.

The protein localises to the nucleus. Its subcellular location is the nucleolus. Its function is as follows. Component of the transcription factor SL1/TIF-IB complex, which is involved in the assembly of the PIC (pre-initiation complex) during RNA polymerase I-dependent transcription. The rate of PIC formation probably is primarily dependent on the rate of association of SL1/TIF-IB with the rDNA promoter. SL1/TIF-IB is involved in stabilization of nucleolar transcription factor 1/UBTF on rDNA. Formation of SL1/TIF-IB excludes the association of TBP with TFIID subunits. This Homo sapiens (Human) protein is TATA box-binding protein-associated factor RNA polymerase I subunit A (TAF1A).